We begin with the raw amino-acid sequence, 57 residues long: Large ribosomal subunit protein bL32 (57 aa).

The protein belongs to the bacterial ribosomal protein bL32 family.

The chain is Large ribosomal subunit protein bL32 from Shouchella clausii (strain KSM-K16) (Alkalihalobacillus clausii).